The sequence spans 153 residues: Calmodulin-like protein 4 (153 aa).

EF-hand domains are found at residues 8 to 43, 44 to 79, 81 to 116, and 117 to 152; these read DQIN…LGAS, PTPG…QIKQ, DPKK…LGEK, and LTHK…PVRD.

Belongs to the calmodulin family. As to quaternary structure, interacts with MYO7B; the interaction mediates the association of CALML4 with the IMAC/intermicrovillar adhesion complex. Interacts with MYO7A.

It localises to the cell projection. The protein localises to the microvillus. Its function is as follows. As part of the intermicrovillar adhesion complex/IMAC plays a role in epithelial brush border differentiation, controlling microvilli organization and length. Acts as a light chain for MYO7B and is required for efficient targeting of the IMAC to the tips of border brush microvilli. This chain is Calmodulin-like protein 4 (CALML4), found in Bos taurus (Bovine).